The following is a 197-amino-acid chain: Recombination protein RecR (197 aa).

The C4-type zinc-finger motif lies at 57-72; that stretch reads CSRCGYLTDFDPCLIC. The 95-residue stretch at 80 to 174 folds into the Toprim domain; it reads SLICIGEESS…KVTRLAHGLP (95 aa).

This sequence belongs to the RecR family.

In terms of biological role, may play a role in DNA repair. It seems to be involved in an RecBC-independent recombinational process of DNA repair. It may act with RecF and RecO. In Syntrophomonas wolfei subsp. wolfei (strain DSM 2245B / Goettingen), this protein is Recombination protein RecR.